The sequence spans 77 residues: Acyl carrier protein (77 aa).

In terms of domain architecture, Carrier spans 2–77 (ADTLERVTKI…DAVNYIQNQQ (76 aa)). Position 37 is an O-(pantetheine 4'-phosphoryl)serine (Ser37).

It belongs to the acyl carrier protein (ACP) family. 4'-phosphopantetheine is transferred from CoA to a specific serine of apo-ACP by AcpS. This modification is essential for activity because fatty acids are bound in thioester linkage to the sulfhydryl of the prosthetic group.

It localises to the cytoplasm. Its pathway is lipid metabolism; fatty acid biosynthesis. Its function is as follows. Carrier of the growing fatty acid chain in fatty acid biosynthesis. This is Acyl carrier protein (acpA) from Bacillus subtilis (strain 168).